A 323-amino-acid chain; its full sequence is Penicillopepsin-1 (323 aa).

S3 is a glycosylation site (O-linked (Man...) serine). Residue T7 is glycosylated (O-linked (Man...) threonine). The 304-residue stretch at 17-320 folds into the Peptidase A1 domain; sequence YITPVTIGGT…DSDGPQLGFA (304 aa). Active-site residues include D33 and D213. A disulfide bond links C249 and C283.

The protein belongs to the peptidase A1 family. Monomer.

It is found in the secreted. It catalyses the reaction Hydrolysis of proteins with broad specificity similar to that of pepsin A, preferring hydrophobic residues at P1 and P1', but also cleaving 20-Gly-|-Glu-21 in the B chain of insulin. Clots milk, and activates trypsinogen.. Functionally, secreted aspartic endopeptidase that allows assimilation of proteinaceous substrates. The scissile peptide bond is attacked by a nucleophilic water molecule activated by two aspartic residues in the active site. Shows a broad primary substrate specificity. Favors hydrophobic residues at the P1 and P1' positions, but can also activate trypsinogen and hydrolyze the B chain of insulin between positions 'Gly-20' and 'Glu-21'. This chain is Penicillopepsin-1, found in Penicillium janthinellum (Penicillium vitale).